The primary structure comprises 106 residues: uncharacterized protein (106 aa).

This is an uncharacterized protein from Pyrococcus woesei.